Consider the following 376-residue polypeptide: Alpha-centractin (376 aa).

Met-1 carries the N-acetylmethionine modification.

It belongs to the actin family. ARP1 subfamily. As to quaternary structure, part of the ACTR1A/ACTB filament around which the dynactin complex is built. The filament contains 8 copies of ACTR1A and 1 ACTB. Interacts with dynein and adapters such as BICD2. Interacts with BCCIP (isoform 2/alpha).

Its subcellular location is the cytoplasm. It localises to the cytoskeleton. The protein resides in the microtubule organizing center. It is found in the centrosome. The protein localises to the cell cortex. Part of the ACTR1A/ACTB filament around which the dynactin complex is built. The dynactin multiprotein complex activates the molecular motor dynein for ultra-processive transport along microtubules. The sequence is that of Alpha-centractin (ACTR1A) from Canis lupus familiaris (Dog).